The primary structure comprises 417 residues: Oxidoreductase phnG (417 aa).

Residues 16–20, Arg-61, and Asp-317 contribute to the 6-hydroxy-FAD site; that span reads GGSYA.

It belongs to the FAD-dependent oxidoreductase family. It depends on 6-hydroxy-FAD as a cofactor.

The enzyme catalyses deoxyherqueinone + NADPH + O2 + H(+) = herqueinone + NADP(+) + H2O. It participates in secondary metabolite biosynthesis. Oxidoreductase; part of the gene cluster that mediates the biosynthesis of phenalenones such as herqueinone, compounds that have been reported to treat tumors, bacterial infections and/or mycoses, and rheumatic diseases. The non-reducing polyketide synthase phnA synthesizes the heptaketide backbone and cyclizes it into the angular, hemiketal-containing naphtho-gamma-pyrone prephenalenone. The product template (PT) domain of phnA catalyzes only the C4-C9 aldol condensation, which is unprecedented among known PT domains. The transformation of prephenalenone to phenalenones requires an FAD-dependent monooxygenase phnB, which catalyzes the C2 aromatic hydroxylation of prephenalenone and ring opening of the gamma-pyrone ring simultaneously. Subsequent intramolecular deprotonation of C3 phenolic oxygen accelerates phenalenone ring closure to yield the tricyclic phenalenone core with a C2 hydroxylation. The prenyltransferase phnF further catalyzes reverse C-prenylation of phenalenone by direct electrophilic substitution at C6, or possibly via first a forward O-prenylation of a neighboring phenol in phenalenone, followed by a Claisen rearrangement. The hydroalkoxylation enzyme phnH catalyzes the 5-exo-trig cyclization via acid catalysis after the spontaneous deprotonation of 7-OH, which leads to the formation of the dihydrobenzofuran atrovenetin. Atrovenetin is further converted to deoxyherqueinone by the O-methyltransferase phnC which can methylate C2-OH to stabilize the northern portion of the phenalenone core. Finally, the oxidoreductase phnG converts deoxyherqueinone to herqueinone via C6 hydroxylation. The protein is Oxidoreductase phnG of Penicillium herquei.